Consider the following 475-residue polypeptide: ATP synthase subunit beta (475 aa).

152–159 lines the ATP pocket; it reads GGAGVGKT.

Belongs to the ATPase alpha/beta chains family. F-type ATPases have 2 components, CF(1) - the catalytic core - and CF(0) - the membrane proton channel. CF(1) has five subunits: alpha(3), beta(3), gamma(1), delta(1), epsilon(1). CF(0) has three main subunits: a(1), b(2) and c(9-12). The alpha and beta chains form an alternating ring which encloses part of the gamma chain. CF(1) is attached to CF(0) by a central stalk formed by the gamma and epsilon chains, while a peripheral stalk is formed by the delta and b chains.

The protein localises to the cell membrane. It carries out the reaction ATP + H2O + 4 H(+)(in) = ADP + phosphate + 5 H(+)(out). Functionally, produces ATP from ADP in the presence of a proton gradient across the membrane. The catalytic sites are hosted primarily by the beta subunits. The sequence is that of ATP synthase subunit beta from Wolbachia pipientis wMel.